The following is a 704-amino-acid chain: Ion-translocating oxidoreductase complex subunit C (704 aa).

4Fe-4S ferredoxin-type domains lie at 368-397 (MGAP…QQLY) and 407-436 (KATA…VQYF). [4Fe-4S] cluster is bound by residues cysteine 377, cysteine 380, cysteine 383, cysteine 387, cysteine 416, cysteine 419, cysteine 422, and cysteine 426. A disordered region spans residues 535 to 684 (ARAKQAAHPM…PADPRKAAVA (150 aa)). Positions 556 to 565 (KAAVEAAIAR) are enriched in low complexity.

This sequence belongs to the 4Fe4S bacterial-type ferredoxin family. RnfC subfamily. The complex is composed of six subunits: RsxA, RsxB, RsxC, RsxD, RsxE and RsxG. Requires [4Fe-4S] cluster as cofactor.

Its subcellular location is the cell inner membrane. Part of a membrane-bound complex that couples electron transfer with translocation of ions across the membrane. Required to maintain the reduced state of SoxR. This is Ion-translocating oxidoreductase complex subunit C from Salmonella paratyphi C (strain RKS4594).